The sequence spans 81 residues: Large ribosomal subunit protein bL31B (81 aa).

The protein belongs to the bacterial ribosomal protein bL31 family. Type B subfamily. Part of the 50S ribosomal subunit.

This chain is Large ribosomal subunit protein bL31B, found in Limosilactobacillus reuteri (strain DSM 20016) (Lactobacillus reuteri).